A 160-amino-acid chain; its full sequence is Cyclic pyranopterin monophosphate synthase (160 aa).

Substrate-binding positions include 77-79 and 114-115; these read MCH and ME. D129 is an active-site residue.

This sequence belongs to the MoaC family. As to quaternary structure, homohexamer; trimer of dimers.

The catalysed reaction is (8S)-3',8-cyclo-7,8-dihydroguanosine 5'-triphosphate = cyclic pyranopterin phosphate + diphosphate. It participates in cofactor biosynthesis; molybdopterin biosynthesis. Catalyzes the conversion of (8S)-3',8-cyclo-7,8-dihydroguanosine 5'-triphosphate to cyclic pyranopterin monophosphate (cPMP). This Listeria monocytogenes serotype 4b (strain F2365) protein is Cyclic pyranopterin monophosphate synthase.